A 553-amino-acid chain; its full sequence is MSLFLKPFLFLYDTTLSLLLLLFNGWSLEDTAAAQKRREADKNAAETEWIQLQYLWTKTRSVVLLPVFKGLVVMCLVLSIIVFFESFYMNFVILFVKLFKRKPHKVYKWEAMQEDVEVGPDNYPMVLIQIPMYNEKEVFQLSIAAICSLVWPSSRLVVQVVDDSTDPAVREGVDVEIAKWQSQGINIRCERRDNRNGYKAGAMKEALTQSYVKQCDFVAVFDADFQPEPDYLIRAVPFLVHNPDVALVQARWIFVNANKCLMTRMQEMSLNYHFKVEQESGSTRHAFFGFNGTAGVWRISAMEAAGGWKSRTTVEDMDLAVRVGLHGWKFVYLNDLTVRNELPSKFKAYRFQQHRWSCGPANLFRKMTMEIIFNKRVSIWKKFYVIYSFFFVRKVAVHFLTFFFYCIIVPTSVFFPEIHIPSWSTIYVPSLISIFHTLATPRSFYLVIFWVLFENVMAMHRTKGTCIGLLEGGRVNEWVVTEKLGDALKSKLLSRVVQRKSCYQRVNSKEVMVGVYILGCALYGLIYGHTWLHFYLFLQATAFFVSGFGFVGT.

Residues 64-84 traverse the membrane as a helical segment; sequence LLPVFKGLVVMCLVLSIIVFF. Residue D163 is part of the active site. 2 residues coordinate substrate: D222 and D224. D316 is an active-site residue. 4 consecutive transmembrane segments (helical) span residues 395-415, 431-451, 510-530, and 531-551; these read VAVH…SVFF, LISI…IFWV, EVMV…YGHT, and WLHF…FGFV.

It belongs to the glycosyltransferase 2 family. Plant cellulose synthase-like A subfamily.

It localises to the golgi apparatus membrane. It catalyses the reaction GDP-mannose + (glucomannan)n = GDP + (glucomannan)n+1.. Its function is as follows. Probable mannan synthase which consists of a 4-beta-mannosyltransferase activity on mannan using GDP-mannose. The beta-1,4-mannan product is the backbone for galactomannan synthesis by galactomannan galactosyltransferase. Galactomannan is a noncellulosic polysaccharides of plant cell wall. This chain is Probable glucomannan 4-beta-mannosyltransferase 1, found in Arabidopsis thaliana (Mouse-ear cress).